The chain runs to 135 residues: MVSRVESVIVFALYKFLQRYFHSFHCFFLLCFTVMLCVVQQCSSAMTSFRCPTFSLSKYTCVLPASIPEMILFTFSSHTFQTPTKKGNKTKKKRKKEKKKETIVEKNKVLKSFALYKKINNYRSTRCVLVCQCKY.

The helical transmembrane segment at 20 to 39 threads the bilayer; it reads YFHSFHCFFLLCFTVMLCVV. Positions 81–101 are disordered; the sequence is QTPTKKGNKTKKKRKKEKKKE. Positions 86–98 are enriched in basic residues; it reads KGNKTKKKRKKEK.

It localises to the mitochondrion membrane. In terms of biological role, has a role in meiosis. This chain is Meiotically up-regulated gene 116 protein (mug116), found in Schizosaccharomyces pombe (strain 972 / ATCC 24843) (Fission yeast).